We begin with the raw amino-acid sequence, 140 residues long: Large ribosomal subunit protein uL22c (140 aa).

It belongs to the universal ribosomal protein uL22 family. Part of the 50S ribosomal subunit.

The protein resides in the plastid. It localises to the chloroplast. In terms of biological role, this protein binds specifically to 23S rRNA. Functionally, the globular domain of the protein is located near the polypeptide exit tunnel on the outside of the subunit, while an extended beta-hairpin is found that lines the wall of the exit tunnel in the center of the 70S ribosome. This is Large ribosomal subunit protein uL22c (rpl22) from Calycanthus floridus var. glaucus (Eastern sweetshrub).